The following is a 520-amino-acid chain: Cyclin-L2 (520 aa).

Cyclin-like regions lie at residues glutamate 81 to lysine 183 and lysine 196 to glutamine 280. The interval arginine 309–arginine 520 is disordered. A phosphoserine mark is found at serine 330, serine 337, serine 347, and serine 350. The segment covering arginine 356–glycine 366 has biased composition (basic and acidic residues). Serine 368 is modified (phosphoserine). Residues arginine 384–serine 422 form an RS region. Positions serine 407–arginine 429 are enriched in low complexity. Positions serine 440–histidine 453 are enriched in basic and acidic residues. Basic residues predominate over residues leucine 454 to serine 471. Composition is skewed to basic and acidic residues over residues arginine 472–glycine 481 and tyrosine 489–glycine 514.

The protein belongs to the cyclin family. Cyclin L subfamily. Interacts with CDK11A, CDK11B, CDK12, CDK13 and POLR2A, the hyperphosphorylated C-terminal domain (CTD) of RNA polymerase II. May form a ternary complex with CDK11B and casein kinase II (CKII). Interacts with pre-mRNA-splicing factors, including at least SRSF1, SRSF2 and SRSF7/SLU7.

Its subcellular location is the nucleus speckle. It is found in the nucleus. The protein localises to the nucleoplasm. In terms of biological role, involved in pre-mRNA splicing. May induce cell death, possibly by acting on the transcription and RNA processing of apoptosis-related factors. The sequence is that of Cyclin-L2 (Ccnl2) from Rattus norvegicus (Rat).